Here is a 431-residue protein sequence, read N- to C-terminus: Phosphoribosylamine--glycine ligase (431 aa).

An ATP-grasp domain is found at 108–315 (KDFLARHKIP…LVLLIEAALA (208 aa)). An ATP-binding site is contributed by 134–195 (LREKGAPIVI…EEFLDGEEAS (62 aa)). Mg(2+) contacts are provided by glutamate 285 and asparagine 287.

The protein belongs to the GARS family. Requires Mg(2+) as cofactor. Mn(2+) serves as cofactor.

It catalyses the reaction 5-phospho-beta-D-ribosylamine + glycine + ATP = N(1)-(5-phospho-beta-D-ribosyl)glycinamide + ADP + phosphate + H(+). It participates in purine metabolism; IMP biosynthesis via de novo pathway; N(1)-(5-phospho-D-ribosyl)glycinamide from 5-phospho-alpha-D-ribose 1-diphosphate: step 2/2. The sequence is that of Phosphoribosylamine--glycine ligase from Pseudomonas syringae pv. tomato (strain ATCC BAA-871 / DC3000).